Here is a 136-residue protein sequence, read N- to C-terminus: Probable intron-encoded DNA endonuclease 3 (136 aa).

This sequence belongs to the LAGLIDADG endonuclease family.

The protein resides in the mitochondrion. Its function is as follows. Mitochondrial DNA endonuclease involved in intron homing. The polypeptide is Probable intron-encoded DNA endonuclease 3 (hegI3) (Mycosarcoma maydis (Corn smut fungus)).